Here is a 462-residue protein sequence, read N- to C-terminus: Metal cation symporter ZIP8 (462 aa).

Residues 1 to 19 (MAPGRAVAGLLLLAATSLG) form the signal peptide. The Extracellular portion of the chain corresponds to 20–132 (HPSEGPELAF…PSLSEVWGYG (113 aa)). N-linked (GlcNAc...) asparagine glycosylation is found at N40, N88, and N96. Residues 133–153 (FLSVTIINLASLLGLILTPLI) traverse the membrane as a helical segment. Residues 154–160 (KKSYFPK) lie on the Cytoplasmic side of the membrane. A helical transmembrane segment spans residues 161-181 (ILTYFVGLAIGTLFSNAIFQL). The Extracellular segment spans residues 182–191 (IPEAFGFNPK). Residues 192–212 (IDNYVEKAVAVFGGFYMLFFV) form a helical membrane-spanning segment. Topologically, residues 213 to 367 (ERTLKMLLKT…LNAGMSTRQA (155 aa)) are cytoplasmic. The XEXPHE-motif signature appears at 345–350 (EEFPHE). The chain crosses the membrane as a helical span at residues 368–388 (LLFNFLSACSCYVGLAFGILV). Residues 389-390 (GN) lie on the Extracellular side of the membrane. The helical transmembrane segment at 391-411 (NFAPNIIFALAGGMFLYISLA) threads the bilayer. Over 412-431 (DMFPEMNDMLREKVTGRQTD) the chain is Cytoplasmic. Residues 432-452 (FTFFMIQNAGMLTGFTAILLI) traverse the membrane as a helical segment. At 453-462 (TLYAGDIELQ) the chain is on the extracellular side.

This sequence belongs to the ZIP transporter (TC 2.A.5) family. Homodimer. Post-translationally, N-glycosylated. N-glycosylation is not required for proper iron and zinc transport. In terms of tissue distribution, ubiquitously expressed.

Its subcellular location is the cell membrane. The protein localises to the apical cell membrane. It is found in the basolateral cell membrane. The protein resides in the lysosome membrane. The enzyme catalyses Zn(2+)(out) + 2 hydrogencarbonate(out) = Zn(2+)(in) + 2 hydrogencarbonate(in). The catalysed reaction is selenite(out) + Zn(2+)(out) + hydrogencarbonate(out) = selenite(in) + Zn(2+)(in) + hydrogencarbonate(in). It carries out the reaction Mn(2+)(out) + 2 hydrogencarbonate(out) = Mn(2+)(in) + 2 hydrogencarbonate(in). It catalyses the reaction Cd(2+)(out) + 2 hydrogencarbonate(out) = Cd(2+)(in) + 2 hydrogencarbonate(in). The enzyme catalyses Fe(2+)(out) + 2 hydrogencarbonate(out) = Fe(2+)(in) + 2 hydrogencarbonate(in). The catalysed reaction is Co(2+)(out) + 2 hydrogencarbonate(out) = Co(2+)(in) + 2 hydrogencarbonate(in). Functionally, electroneutral divalent metal cation:bicarbonate symporter of the plasma membrane mediating the cellular uptake of zinc and manganese, two divalent metal cations important for development, tissue homeostasis and immunity. Transports an electroneutral complex composed of a divalent metal cation and two bicarbonate anions or alternatively a bicarbonate and a selenite anion. Thereby, it also contributes to the cellular uptake of selenium, an essential trace metal and micronutrient. Also imports cadmium a non-essential metal which is cytotoxic and carcinogenic. May also transport iron and cobalt through membranes. Through zinc import, indirectly regulates the metal-dependent transcription factor MTF1 and the expression of some metalloproteases involved in cartilage catabolism and also probably heart development. Also indirectly regulates the expression of proteins involved in cell morphology and cytoskeleton organization. Indirectly controls innate immune function and inflammatory response by regulating zinc cellular uptake which in turn modulates the expression of genes specific of these processes. Protects, for instance, cells from injury and death at the onset of inflammation. By regulating zinc influx into monocytes also directly modulates their adhesion to endothelial cells and arteries. Reclaims manganese from the bile at the apical membrane of hepatocytes, thereby regulating the activity of the manganese-dependent enzymes through the systemic levels of the nutrient. Also participates in manganese reabsorption in the proximal tubule of the kidney. By mediating the extracellular uptake of manganese by cells of the blood-brain barrier, may also play a role in the transport of the micronutrient to the brain. With manganese cellular uptake also participates in mitochondrial proper function. Finally, also probably functions intracellularly, translocating zinc from lysosome to cytosol to indirectly enhance the expression of specific genes during TCR-mediated T cell activation. The polypeptide is Metal cation symporter ZIP8 (Mus musculus (Mouse)).